The sequence spans 419 residues: Peroxisome biogenesis factor 10 (419 aa).

The Peroxisomal matrix segment spans residues Met-1–Asn-27. Residues Ala-28 to Lys-57 traverse the membrane as a helical segment. A topological domain (cytoplasmic) is located at residue Gly-58. A helical transmembrane segment spans residues Gln-59–Leu-80. Residues Thr-81–Arg-108 are Peroxisomal matrix-facing. A helical membrane pass occupies residues Tyr-109–Asp-141. Residues Glu-142–Ile-158 are Cytoplasmic-facing. Residues Glu-159–Ser-185 traverse the membrane as a helical segment. The Peroxisomal matrix portion of the chain corresponds to Gly-186–Asn-215. Residues Tyr-216 to Phe-235 form a helical membrane-spanning segment. At Lys-236–Phe-419 the chain is on the cytoplasmic side. Residues Cys-298, Cys-301, Cys-313, His-315, Cys-318, Cys-321, Cys-334, and Cys-347 each contribute to the Zn(2+) site. An RING-type zinc finger spans residues Cys-298–Cys-360.

Belongs to the pex2/pex10/pex12 family. Component of the peroxisomal translocation complex, composed of at least PEX3, PEX2, PEX10 and PEX12. Interacts with PEX19.

It localises to the peroxisome membrane. It catalyses the reaction S-ubiquitinyl-[E2 ubiquitin-conjugating enzyme]-L-cysteine + [acceptor protein]-L-lysine = [E2 ubiquitin-conjugating enzyme]-L-cysteine + N(6)-ubiquitinyl-[acceptor protein]-L-lysine.. It functions in the pathway protein modification; protein ubiquitination. Its activity is regulated as follows. The E3 ubiquitin-protein ligase activity is stimulated by PEX12. E3 ubiquitin-protein ligase component of the peroxisomal translocation complex. The two types of peroxisomal matrix targeting signals, PTS1 and PTS2, are first recognized in the cytosol by their receptors PEX5 and PEX7, respectively, which then carry the cargo to the peroxisomal membrane. The peroxisomal targeting signal (PTS) receptor-cargo complexes interact with peroxisomal membrane protein (PMP) components of the docking complex. They have then additional downstream interactions with the translocation complex, leading to the transport of fully folded and oligomerized cargo into the peroxisome matrix. The peroxisomal translocation complex forms the retrotranslocation channel with each subunit contributing transmembrane segments that coassemble into an open channel that specifically allows the passage of PEX5 and PEX20 through the peroxisomal membrane. Specifically catalyzes monoubiquitination of PEX5 and/or PEX20 at 'Cys-6' and 'Cys-8', respectively, a modification that acts as a signal for PEX5 or PEX20 export from peroxisomes to the cytosol, thereby promoting PEX5 and PEX20 recycling. The sequence is that of Peroxisome biogenesis factor 10 from Komagataella pastoris (Yeast).